The following is a 296-amino-acid chain: Bifunctional protein FolD (296 aa).

Residues 166–168 (GRS), S195, and T236 each bind NADP(+).

The protein belongs to the tetrahydrofolate dehydrogenase/cyclohydrolase family. As to quaternary structure, homodimer.

The catalysed reaction is (6R)-5,10-methylene-5,6,7,8-tetrahydrofolate + NADP(+) = (6R)-5,10-methenyltetrahydrofolate + NADPH. It catalyses the reaction (6R)-5,10-methenyltetrahydrofolate + H2O = (6R)-10-formyltetrahydrofolate + H(+). It functions in the pathway one-carbon metabolism; tetrahydrofolate interconversion. Its function is as follows. Catalyzes the oxidation of 5,10-methylenetetrahydrofolate to 5,10-methenyltetrahydrofolate and then the hydrolysis of 5,10-methenyltetrahydrofolate to 10-formyltetrahydrofolate. The chain is Bifunctional protein FolD from Dehalococcoides mccartyi (strain CBDB1).